We begin with the raw amino-acid sequence, 349 residues long: Small ribosomal subunit protein uS2 (349 aa).

Residues 302-334 are disordered; the sequence is QNNYDPSKRGYNPKYVNHKSTFNKFNNKKPVDS.

It belongs to the universal ribosomal protein uS2 family.

This is Small ribosomal subunit protein uS2 from Ureaplasma parvum serovar 3 (strain ATCC 27815 / 27 / NCTC 11736).